The sequence spans 320 residues: Phosphate acetyltransferase (320 aa).

The protein belongs to the phosphate acetyltransferase and butyryltransferase family.

It is found in the cytoplasm. It carries out the reaction acetyl-CoA + phosphate = acetyl phosphate + CoA. It participates in metabolic intermediate biosynthesis; acetyl-CoA biosynthesis; acetyl-CoA from acetate: step 2/2. In Mycoplasma genitalium (strain ATCC 33530 / DSM 19775 / NCTC 10195 / G37) (Mycoplasmoides genitalium), this protein is Phosphate acetyltransferase (pta).